The primary structure comprises 78 residues: Delta-conotoxin-like S6.8 (78 aa).

Positions methionine 1–alanine 22 are cleaved as a signal peptide. The propeptide occupies aspartate 23 to glycine 53. Disulfide bonds link cysteine 54–cysteine 69, cysteine 61–cysteine 73, and cysteine 68–cysteine 77.

It belongs to the conotoxin O1 superfamily. As to expression, expressed by the venom duct.

Its subcellular location is the secreted. Delta-conotoxins bind to site 6 of voltage-gated sodium channels (Nav) and inhibit the inactivation process. The protein is Delta-conotoxin-like S6.8 of Conus striatus (Striated cone).